A 453-amino-acid polypeptide reads, in one-letter code: Divalent metal cation transporter MntH (453 aa).

A run of 11 helical transmembrane segments spans residues 39-59 (LAFLGPGLLVAVGYMDPGNWI), 66-86 (AQYGYTLLFIILISSLSAMLL), 114-134 (AIMFWIIAELAIIATDIAEVI), 146-166 (IPLIVGALITVFDVFLLLFIM), 175-195 (AIVGTLIFTVLAIFVFEVYIS), 217-237 (GILYIALGIIGATIMPHNLYL), 270-290 (LSIAFVVNCLLLTLGAALFFG), 310-330 (PALGATLGGIMSTLFAVALLA), 362-382 (LITRSLAVIPVIICLIVFKGN), 388-408 (QLLVFSQVFLSIALPFSLIPL), and 427-447 (INIISWLLIIVLSGLNVYLII).

This sequence belongs to the NRAMP family.

The protein localises to the cell membrane. Its function is as follows. H(+)-stimulated, divalent metal cation uptake system. The chain is Divalent metal cation transporter MntH from Staphylococcus epidermidis (strain ATCC 12228 / FDA PCI 1200).